The sequence spans 365 residues: MNILKISKQTLRNNIKIIREYIGNAKMCFPVKANAYGHGIEDIVENTHDLVDFFAVANSLEAFRVTAVAKNPVLVFGVIYYEYIEKMISENIRVSIQDYEDIEKLEQIAKELDKKVYAHININTGMNRMGVDYNDACRTIQRAYESDWLILEGVYSHLACADNRDHPTNIKQKNRFDSIVKFTKGLSQDIICHLSNSYGFLGQKGICYDMVRPGILSYGFLPEFYVDRVIREIKPIARLLSKVVKIITLQEGEGVGYSLIYRGFEDEQLAVIPIGYGDGFPRELGDRGFVNINDVMYPMAGRMSMDGLTVSLGINEYDVKVGDTVELISAIPRNRNSAFSIAKQTNTIEYDIMSTLNDRIIRKII.

The active-site Proton acceptor; specific for D-alanine is the lysine 32. Lysine 32 bears the N6-(pyridoxal phosphate)lysine mark. Arginine 128 provides a ligand contact to substrate. Residue tyrosine 257 is the Proton acceptor; specific for L-alanine of the active site. Position 305 (methionine 305) interacts with substrate.

Belongs to the alanine racemase family. Pyridoxal 5'-phosphate serves as cofactor.

It catalyses the reaction L-alanine = D-alanine. It participates in amino-acid biosynthesis; D-alanine biosynthesis; D-alanine from L-alanine: step 1/1. Catalyzes the interconversion of L-alanine and D-alanine. May also act on other amino acids. The protein is Alanine racemase (alr) of Francisella tularensis subsp. tularensis (strain SCHU S4 / Schu 4).